Here is a 156-residue protein sequence, read N- to C-terminus: Cyclin-dependent kinase inhibitor 2A (156 aa).

Residue Met1 is modified to N-acetylmethionine. Phosphoserine occurs at positions 7 and 8. 4 ANK repeats span residues 11–40, 44–72, 77–106, and 110–139; these read PSAD…LPNA, YGRR…EPNC, TLTR…RLDV, and WGRL…GTRG. A phosphoserine mark is found at Ser140 and Ser152.

It belongs to the CDKN2 cyclin-dependent kinase inhibitor family. Heterodimer with CDK4 or CDK6. Predominant p16 complexes contained CDK6. Interacts with CDK4 (both 'T-172'-phosphorylated and non-phosphorylated forms); the interaction inhibits cyclin D-CDK4 kinase activity. Interacts with ISCO2. Phosphorylation seems to increase interaction with CDK4. Widely expressed but not detected in brain or skeletal muscle. Isoform 3 is pancreas-specific.

It localises to the cytoplasm. The protein localises to the nucleus. Functionally, acts as a negative regulator of the proliferation of normal cells by interacting strongly with CDK4 and CDK6. This inhibits their ability to interact with cyclins D and to phosphorylate the retinoblastoma protein. This is Cyclin-dependent kinase inhibitor 2A from Homo sapiens (Human).